The chain runs to 943 residues: Isoleucine--tRNA ligase (943 aa).

The 'HIGH' region signature appears at 58–68; the sequence is PYANGNIHIGH. Glu-567 is a binding site for L-isoleucyl-5'-AMP. The 'KMSKS' region signature appears at 608-612; it reads KMSKS. Lys-611 contacts ATP. 4 residues coordinate Zn(2+): Cys-906, Cys-909, Cys-926, and Cys-929.

The protein belongs to the class-I aminoacyl-tRNA synthetase family. IleS type 1 subfamily. Monomer. Requires Zn(2+) as cofactor.

It localises to the cytoplasm. The enzyme catalyses tRNA(Ile) + L-isoleucine + ATP = L-isoleucyl-tRNA(Ile) + AMP + diphosphate. Functionally, catalyzes the attachment of isoleucine to tRNA(Ile). As IleRS can inadvertently accommodate and process structurally similar amino acids such as valine, to avoid such errors it has two additional distinct tRNA(Ile)-dependent editing activities. One activity is designated as 'pretransfer' editing and involves the hydrolysis of activated Val-AMP. The other activity is designated 'posttransfer' editing and involves deacylation of mischarged Val-tRNA(Ile). The protein is Isoleucine--tRNA ligase of Pseudomonas savastanoi pv. phaseolicola (strain 1448A / Race 6) (Pseudomonas syringae pv. phaseolicola (strain 1448A / Race 6)).